The following is a 158-amino-acid chain: Transcription elongation factor GreA (158 aa).

The stretch at 48–74 (EYDAAKNRQGFIEGRIKELNDKIARAE) forms a coiled coil.

It belongs to the GreA/GreB family.

Its function is as follows. Necessary for efficient RNA polymerase transcription elongation past template-encoded arresting sites. The arresting sites in DNA have the property of trapping a certain fraction of elongating RNA polymerases that pass through, resulting in locked ternary complexes. Cleavage of the nascent transcript by cleavage factors such as GreA or GreB allows the resumption of elongation from the new 3'terminus. GreA releases sequences of 2 to 3 nucleotides. The polypeptide is Transcription elongation factor GreA (Syntrophotalea carbinolica (strain DSM 2380 / NBRC 103641 / GraBd1) (Pelobacter carbinolicus)).